Reading from the N-terminus, the 826-residue chain is Villin-1 (826 aa).

The core stretch occupies residues Met-1–Asp-734. The Gelsolin-like 1 repeat unit spans residues Met-27–Gly-76. Lys-112 to Gln-119 is a binding site for a 1,2-diacyl-sn-glycero-3-phospho-(1D-myo-inositol-4,5-bisphosphate). A crucial for binding an actin filament region spans residues Val-129–Gln-137. Residue Arg-138–Lys-146 coordinates a 1,2-diacyl-sn-glycero-3-phospho-(1D-myo-inositol-4,5-bisphosphate). 5 Gelsolin-like repeats span residues Val-148–Leu-188, Leu-265–Gln-309, Gln-408–Ala-457, Thr-528–Glu-568, and Phe-631–Glu-672. Positions Asn-735 to Phe-826 are headpiece. Residues Pro-760–Phe-826 form the HP domain. The absolutely required for activity stretch occupies residues Lys-820–Lys-823.

This sequence belongs to the villin/gelsolin family. Monomer. Homodimer. Associates with F-actin; the association with F-actin is inhibited by tropomyosin. Phosphorylated on tyrosine residues. The unphosphorylated form increases the initial rate of actin-nucleating activity, whereas the tyrosine-phosphorylated form inhibits actin-nucleating activity, enhances actin-bundling activity and enhances actin-severing activity by reducing high Ca(2+) requirements. The tyrosine-phosphorylated form does not regulate actin-capping activity. Tyrosine phosphorylation is essential for cell migration: tyrosine phosphorylation sites in the N-terminus half regulate actin reorganization and cell morphology, whereas tyrosine phosphorylation sites in the C-terminus half regulate cell migration. Tyrosine phosphorylation is induced by epidermal growth factor (EGF) and stimulates cell migration. Specifically expressed in epithelial cells. Component of brush border microvilli.

The protein localises to the cytoplasm. It localises to the cytoskeleton. It is found in the cell projection. The protein resides in the microvillus. Its subcellular location is the lamellipodium. The protein localises to the ruffle. It localises to the filopodium tip. It is found in the filopodium. Epithelial cell-specific Ca(2+)-regulated actin-modifying protein that modulates the reorganization of microvillar actin filaments. Plays a role in the actin nucleation, actin filament bundle assembly, actin filament capping and severing. Binds phosphatidylinositol 4,5-bisphosphate (PIP2) and lysophosphatidic acid (LPA); binds LPA with higher affinity than PIP2. Binding to LPA increases its phosphorylation by SRC and inhibits all actin-modifying activities. Binding to PIP2 inhibits actin-capping and -severing activities but enhances actin-bundling activity. Regulates the intestinal epithelial cell morphology, cell invasion, cell migration and apoptosis. Protects against apoptosis induced by dextran sodium sulfate (DSS) in the gastrointestinal epithelium. Appears to regulate cell death by maintaining mitochondrial integrity. Enhances hepatocyte growth factor (HGF)-induced epithelial cell motility, chemotaxis and wound repair. Its actin-bundling activity is inhibited by tropomyosin. The sequence is that of Villin-1 (VIL1) from Gallus gallus (Chicken).